The primary structure comprises 512 residues: Phosphoenolpyruvate carboxylase (512 aa).

It belongs to the PEPCase type 2 family. As to quaternary structure, homotetramer. It depends on Mg(2+) as a cofactor.

It carries out the reaction oxaloacetate + phosphate = phosphoenolpyruvate + hydrogencarbonate. Catalyzes the irreversible beta-carboxylation of phosphoenolpyruvate (PEP) to form oxaloacetate (OAA), a four-carbon dicarboxylic acid source for the tricarboxylic acid cycle. This Caldivirga maquilingensis (strain ATCC 700844 / DSM 13496 / JCM 10307 / IC-167) protein is Phosphoenolpyruvate carboxylase.